The primary structure comprises 22 residues: Peroxidase 5 (22 aa).

Belongs to the peroxidase family. Classical plant (class III) peroxidase subfamily. The cofactor is heme b. It depends on Ca(2+) as a cofactor.

It localises to the secreted. It is found in the cell wall. It carries out the reaction 2 a phenolic donor + H2O2 = 2 a phenolic radical donor + 2 H2O. In terms of biological role, removal of H(2)O(2), oxidation of toxic reductants, biosynthesis and degradation of lignin, suberization, auxin catabolism, response to environmental stresses such as wounding, pathogen attack and oxidative stress. These functions might be dependent on each isozyme/isoform in each plant tissue. This chain is Peroxidase 5, found in Cycas revoluta (Sago palm).